A 210-amino-acid polypeptide reads, in one-letter code: DNA-directed RNA polymerases I, II, and III subunit RPABC1 (210 aa).

The residue at position 1 (M1) is an N-acetylmethionine. Residue K81 forms a Glycyl lysine isopeptide (Lys-Gly) (interchain with G-Cter in SUMO2) linkage.

Belongs to the archaeal Rpo5/eukaryotic RPB5 RNA polymerase subunit family. In terms of assembly, component of the RNA polymerase I (Pol I), RNA polymerase II (Pol II) and RNA polymerase III (Pol III) complexes consisting of at least 13, 12 and 17 subunits, respectively. Pol I complex consists of a ten-subunit catalytic core composed of POLR1A/RPA1, POLR1B/RPA2, POLR1C/RPAC1, POLR1D/RPAC2, POLR1H/RPA12, POLR2E/RPABC1, POLR2F/RPABC2, POLR2H/RPABC3, POLR2K/RPABC4 and POLR2L/RPABC5; a mobile stalk subunit POLR1F/RPA43 protruding from the core and additional subunits homologous to general transcription factors POLR1E/RPA49 and POLR1G/RPA34. Part of Pol I pre-initiation complex (PIC), in which Pol I core assembles with RRN3 and promoter-bound UTBF and SL1/TIF-IB complex. Pol II complex contains a ten-subunit catalytic core composed of POLR2A/RPB1, POLR2B/RPB2, POLR2C/RPB3, POLR2I/RPB9, POLR2J/RPB11, POLR2E/RPABC1, POLR2F/RPABC2, POLR2H/RPABC3, POLR2K/RPABC4 and POLR2L/RPABC5 and a mobile stalk composed of two subunits POLR2D/RPB4 and POLR2G/RPB7. Part of Pol II(G) complex, in which Pol II core associates with an additional subunit POLR2M; unlike conventional Pol II, Pol II(G) functions as a transcriptional repressor. Part of TBP-based Pol II pre-initiation complex (PIC), in which Pol II core assembles with general transcription factors and other specific initiation factors including GTF2E1, GTF2E2, GTF2F1, GTF2F2, TCEA1, ERCC2, ERCC3, GTF2H2, GTF2H3, GTF2H4, GTF2H5, GTF2A1, GTF2A2, GTF2B and TBP; this large multi-subunit PIC complex mediates DNA unwinding and targets Pol II core to the transcription start site where the first phosphodiester bond forms. In Pol II complex, this subunit is present in 2-fold molar excess over the other subunits. Pol III complex consists of a ten-subunit catalytic core composed of POLR3A/RPC1, POLR3B/RPC2, POLR1C/RPAC1, POLR1D/RPAC2, POLR3K/RPC10, POLR2E/RPABC1, POLR2F/RPABC2, POLR2H/RPABC3, POLR2K/RPABC4 and POLR2L/RPABC5; a mobile stalk composed of two subunits POLR3H/RPC8 and CRCP/RPC9, protruding from the core and functioning primarily in transcription initiation; and additional subunits homologous to general transcription factors of the RNA polymerase II machinery, POLR3C/RPC3-POLR3F/RPC6-POLR3G/RPC7 heterotrimer required for transcription initiation and POLR3D/RPC4-POLR3E/RPC5 heterodimer involved in both transcription initiation and termination. Component of the PAQosome complex which is responsible for the biogenesis of several protein complexes and which consists of R2TP complex members RUVBL1, RUVBL2, RPAP3 and PIH1D1, URI complex members PFDN2, PFDN6, PDRG1, UXT and URI1 as well as ASDURF, POLR2E and DNAAF10/WDR92. Interacts with URI1.

The protein resides in the nucleus. It is found in the nucleolus. DNA-dependent RNA polymerase catalyzes the transcription of DNA into RNA using the four ribonucleoside triphosphates as substrates. Common component of RNA polymerases I, II and III which synthesize ribosomal RNA precursors, mRNA precursors and many functional non-coding RNAs, and small RNAs, such as 5S rRNA and tRNAs, respectively. Pol II is the central component of the basal RNA polymerase II transcription machinery. Pols are composed of mobile elements that move relative to each other. In Pol II, POLR2E/RPABC1 is part of the lower jaw surrounding the central large cleft and thought to grab the incoming DNA template. Seems to be the major component in this process. This chain is DNA-directed RNA polymerases I, II, and III subunit RPABC1, found in Mus musculus (Mouse).